Reading from the N-terminus, the 324-residue chain is Phospho-N-acetylmuramoyl-pentapeptide-transferase (324 aa).

The next 10 membrane-spanning stretches (helical) occupy residues 5-25, 52-72, 77-97, 122-142, 149-169, 176-196, 201-221, 227-247, 253-273, and 302-322; these read GLLV…PLFI, PTMG…IMAI, LGAE…IGFL, VIAI…YIMI, FELG…GSNA, LDGL…IIAV, FGVA…LVFN, VFMG…VAIL, LLVI…IQVI, and VVVT…YIGV.

This sequence belongs to the glycosyltransferase 4 family. MraY subfamily. Mg(2+) serves as cofactor.

It localises to the cell membrane. It catalyses the reaction UDP-N-acetyl-alpha-D-muramoyl-L-alanyl-gamma-D-glutamyl-meso-2,6-diaminopimeloyl-D-alanyl-D-alanine + di-trans,octa-cis-undecaprenyl phosphate = di-trans,octa-cis-undecaprenyl diphospho-N-acetyl-alpha-D-muramoyl-L-alanyl-D-glutamyl-meso-2,6-diaminopimeloyl-D-alanyl-D-alanine + UMP. The protein operates within cell wall biogenesis; peptidoglycan biosynthesis. In terms of biological role, catalyzes the initial step of the lipid cycle reactions in the biosynthesis of the cell wall peptidoglycan: transfers peptidoglycan precursor phospho-MurNAc-pentapeptide from UDP-MurNAc-pentapeptide onto the lipid carrier undecaprenyl phosphate, yielding undecaprenyl-pyrophosphoryl-MurNAc-pentapeptide, known as lipid I. This Bacillus anthracis protein is Phospho-N-acetylmuramoyl-pentapeptide-transferase.